The chain runs to 295 residues: ATP synthase gamma chain (295 aa).

Belongs to the ATPase gamma chain family. As to quaternary structure, F-type ATPases have 2 components, CF(1) - the catalytic core - and CF(0) - the membrane proton channel. CF(1) has five subunits: alpha(3), beta(3), gamma(1), delta(1), epsilon(1). CF(0) has three main subunits: a, b and c.

The protein resides in the cell membrane. Produces ATP from ADP in the presence of a proton gradient across the membrane. The gamma chain is believed to be important in regulating ATPase activity and the flow of protons through the CF(0) complex. This is ATP synthase gamma chain from Desulforudis audaxviator (strain MP104C).